The sequence spans 261 residues: MKIRVGVIGCLGRMGKKILNELITNTKVEIAGAVARSGSKYIDSDIGPIIANLGIKVTSSISDVFESSDVVIDFTTKECMLDCLKAAVKFKTPLVSGTTGIEGVDLKEYAAEVPILWSANMSVGVNVLLKLVKKAAELLGNEYDVEIWEMHHNLKKDSPSGTAIELGKTIANASKVDFQSNQYLHSGSNIRKKGGIGFAVSRGGGVIGDHSVMFVNSDERIELNHKAIDRTTFARGAVQAAVWLYENKREIPGLYSMQDVI.

9-14 provides a ligand contact to NAD(+); it reads GCLGRM. R36 is a binding site for NADP(+). NAD(+) contacts are provided by residues 97–99 and 118–121; these read GTT and SANM. H151 serves as the catalytic Proton donor/acceptor. Residue H152 coordinates (S)-2,3,4,5-tetrahydrodipicolinate. The Proton donor role is filled by K155. 161–162 contributes to the (S)-2,3,4,5-tetrahydrodipicolinate binding site; sequence GT.

This sequence belongs to the DapB family.

It localises to the cytoplasm. The catalysed reaction is (S)-2,3,4,5-tetrahydrodipicolinate + NAD(+) + H2O = (2S,4S)-4-hydroxy-2,3,4,5-tetrahydrodipicolinate + NADH + H(+). The enzyme catalyses (S)-2,3,4,5-tetrahydrodipicolinate + NADP(+) + H2O = (2S,4S)-4-hydroxy-2,3,4,5-tetrahydrodipicolinate + NADPH + H(+). The protein operates within amino-acid biosynthesis; L-lysine biosynthesis via DAP pathway; (S)-tetrahydrodipicolinate from L-aspartate: step 4/4. Functionally, catalyzes the conversion of 4-hydroxy-tetrahydrodipicolinate (HTPA) to tetrahydrodipicolinate. The polypeptide is 4-hydroxy-tetrahydrodipicolinate reductase (Wolbachia sp. subsp. Drosophila simulans (strain wRi)).